We begin with the raw amino-acid sequence, 341 residues long: Phenylalanine--tRNA ligase alpha subunit (341 aa).

Residue glutamate 256 participates in Mg(2+) binding.

This sequence belongs to the class-II aminoacyl-tRNA synthetase family. Phe-tRNA synthetase alpha subunit type 1 subfamily. Tetramer of two alpha and two beta subunits. Mg(2+) serves as cofactor.

The protein resides in the cytoplasm. It carries out the reaction tRNA(Phe) + L-phenylalanine + ATP = L-phenylalanyl-tRNA(Phe) + AMP + diphosphate + H(+). This chain is Phenylalanine--tRNA ligase alpha subunit, found in Chlamydia abortus (strain DSM 27085 / S26/3) (Chlamydophila abortus).